We begin with the raw amino-acid sequence, 292 residues long: Xyloglucan endotransglucosylase/hydrolase protein A (292 aa).

A signal peptide spans 1–20 (MGSSLWTCLILLSLASASFA). The GH16 domain occupies 21–219 (ANPRTPIDVP…WSKAPFIASY (199 aa)). Residue E105 is the Nucleophile of the active site. E109 (proton donor) is an active-site residue. E109 lines the xyloglucan pocket. N-linked (GlcNAc...) asparagine glycosylation is present at N113. Xyloglucan is bound by residues 122–124 (QTN), 132–134 (DRE), 198–199 (DW), and G203. 2 cysteine pairs are disulfide-bonded: C227/C236 and C273/C286. Residue R278 coordinates xyloglucan.

The protein belongs to the glycosyl hydrolase 16 family. XTH group 1 subfamily. In terms of processing, contains at least one intrachain disulfide bond essential for its enzymatic activity. Predominantly expressed in the phloem fibers of growing internodes. Expressed in xylem cells in the basal part of the internode. In the internode, it is expressed closer to the top of the internode compared to XTHB.

Its subcellular location is the secreted. It localises to the cell wall. It is found in the extracellular space. The protein localises to the apoplast. The enzyme catalyses breaks a beta-(1-&gt;4) bond in the backbone of a xyloglucan and transfers the xyloglucanyl segment on to O-4 of the non-reducing terminal glucose residue of an acceptor, which can be a xyloglucan or an oligosaccharide of xyloglucan.. Catalyzes xyloglucan endohydrolysis (XEH) and/or endotransglycosylation (XET). Cleaves and religates xyloglucan polymers, an essential constituent of the primary cell wall, and thereby participates in cell wall construction of growing tissues. The chain is Xyloglucan endotransglucosylase/hydrolase protein A (XTHA) from Phaseolus angularis (Azuki bean).